Reading from the N-terminus, the 195-residue chain is Imidazoleglycerol-phosphate dehydratase (195 aa).

Belongs to the imidazoleglycerol-phosphate dehydratase family.

Its subcellular location is the cytoplasm. The enzyme catalyses D-erythro-1-(imidazol-4-yl)glycerol 3-phosphate = 3-(imidazol-4-yl)-2-oxopropyl phosphate + H2O. Its pathway is amino-acid biosynthesis; L-histidine biosynthesis; L-histidine from 5-phospho-alpha-D-ribose 1-diphosphate: step 6/9. The polypeptide is Imidazoleglycerol-phosphate dehydratase (Endomicrobium trichonymphae).